We begin with the raw amino-acid sequence, 506 residues long: ATP synthase subunit alpha (506 aa).

170 to 177 (GDRQTGKT) serves as a coordination point for ATP.

This sequence belongs to the ATPase alpha/beta chains family. As to quaternary structure, F-type ATPases have 2 components, CF(1) - the catalytic core - and CF(0) - the membrane proton channel. CF(1) has five subunits: alpha(3), beta(3), gamma(1), delta(1), epsilon(1). CF(0) has four main subunits: a(1), b(1), b'(1) and c(9-12).

The protein resides in the cellular thylakoid membrane. It carries out the reaction ATP + H2O + 4 H(+)(in) = ADP + phosphate + 5 H(+)(out). Functionally, produces ATP from ADP in the presence of a proton gradient across the membrane. The alpha chain is a regulatory subunit. In Synechococcus sp. (strain JA-2-3B'a(2-13)) (Cyanobacteria bacterium Yellowstone B-Prime), this protein is ATP synthase subunit alpha.